A 144-amino-acid polypeptide reads, in one-letter code: Large ribosomal subunit protein uL15 (144 aa).

The interval 1–58 (MKLNTLSPAAGAKHAAKRVGRGIGSGLGKTAGRGHKGQKSRSGGSIRPGFEGGQMPLK) is disordered. Residues 21–31 (RGIGSGLGKTA) show a composition bias toward gly residues.

This sequence belongs to the universal ribosomal protein uL15 family. In terms of assembly, part of the 50S ribosomal subunit.

Binds to the 23S rRNA. This chain is Large ribosomal subunit protein uL15, found in Psychromonas ingrahamii (strain DSM 17664 / CCUG 51855 / 37).